A 36-amino-acid chain; its full sequence is Pancreatic polypeptide (36 aa).

Phe-36 bears the Phenylalanine amide mark.

Belongs to the NPY family.

Its subcellular location is the secreted. Its function is as follows. Hormone secreted by pancreatic cells that acts as a regulator of pancreatic and gastrointestinal functions. This is Pancreatic polypeptide (ppy) from Rana temporaria (European common frog).